Consider the following 236-residue polypeptide: Bacterial rhodopsin CSR3 (236 aa).

The Extracellular portion of the chain corresponds to 1 to 3 (MDA). Residues 4 to 25 (VAVVYGITAAGFAVGVAIVGYL) form a helical membrane-spanning segment. Over 26–34 (YASLEGSEE) the chain is Cytoplasmic. A helical membrane pass occupies residues 35–56 (RSILAALALIPGFAGISYVAMA). Residues 57–70 (FGIGTVTIGETTLV) lie on the Extracellular side of the membrane. A helical membrane pass occupies residues 71 to 92 (GFRYLDWVVTTPLLVGFVGYAA). The Cytoplasmic segment spans residues 93-95 (GAS). A helical membrane pass occupies residues 96–118 (RRAIFGVMVADALMILTGVGAVV). Over 119–122 (ADGT) the chain is Extracellular. Residues 123–150 (LKWVLFGVSTVFHVSLFAYLYLVFPRSV) traverse the membrane as a helical segment. Over 151–153 (PDD) the chain is Cytoplasmic. Residues 154–181 (PQRIGLFSLLKNHIGLLWIAYPLVWLAG) traverse the membrane as a helical segment. Residues 182 to 189 (PEGLGLAT) lie on the Extracellular side of the membrane. A helical membrane pass occupies residues 190 to 222 (YVGVSITYAFLDLLAKVPYVYFFYARRQVFATK). Lys-205 is subject to N6-(retinylidene)lysine. Residues 223–236 (LLRDSGEVTATPAD) lie on the Cytoplasmic side of the membrane.

The protein belongs to the archaeal/bacterial/fungal opsin family.

It localises to the cell membrane. In Haloarcula vallismortis (Halobacterium vallismortis), this protein is Bacterial rhodopsin CSR3.